The following is a 472-amino-acid chain: Serine/threonine-protein phosphatase T (472 aa).

TPR repeat units lie at residues 7–40, 41–73, and 74–107; these read ADKL…TKTP, TLFC…EPTF, and AKAY…APQN. Asp-217, His-219, Asp-246, and Asn-278 together coordinate Mn(2+). Catalysis depends on His-279, which acts as the Proton donor/acceptor. Mn(2+)-binding residues include His-327 and His-403.

It belongs to the PPP phosphatase family. PP-5 (PP-T) subfamily. The cofactor is Mg(2+). It depends on Mn(2+) as a cofactor.

Its subcellular location is the cytoplasm. The protein resides in the cytosol. The protein localises to the nucleus. The enzyme catalyses O-phospho-L-seryl-[protein] + H2O = L-seryl-[protein] + phosphate. The catalysed reaction is O-phospho-L-threonyl-[protein] + H2O = L-threonyl-[protein] + phosphate. With respect to regulation, activated by arachidonic acid. Its function is as follows. May function as a protein phosphatase. The polypeptide is Serine/threonine-protein phosphatase T (Trypanosoma brucei brucei (strain 927/4 GUTat10.1)).